The following is a 118-amino-acid chain: uncharacterized protein (118 aa).

The next 3 helical transmembrane spans lie at 20 to 39 (VEGP…LLWI), 46 to 63 (LVVV…GEAV), and 67 to 85 (LSLV…AMSG). The segment at 85-118 (GDKSKKKGKKQRSILKDADDWDDDSWDDEGDWDE) is disordered. A compositionally biased stretch (basic residues) spans 88 to 97 (SKKKGKKQRS). Acidic residues predominate over residues 103 to 118 (DDWDDDSWDDEGDWDE).

It localises to the cell membrane. This is an uncharacterized protein from Archaeoglobus fulgidus (strain ATCC 49558 / DSM 4304 / JCM 9628 / NBRC 100126 / VC-16).